The primary structure comprises 310 residues: ADP-L-glycero-D-manno-heptose-6-epimerase (310 aa).

NADP(+)-binding positions include 10–11, 31–32, lysine 38, lysine 53, 75–79, and asparagine 92; these read LI, DN, and EGACS. Tyrosine 140 acts as the Proton acceptor in catalysis. Lysine 144 contributes to the NADP(+) binding site. Residue asparagine 169 coordinates substrate. Valine 170 and lysine 178 together coordinate NADP(+). The Proton acceptor role is filled by lysine 178. Substrate is bound by residues serine 180, histidine 187, 201-204, arginine 209, and tyrosine 272; that span reads FAGS.

It belongs to the NAD(P)-dependent epimerase/dehydratase family. HldD subfamily. In terms of assembly, homopentamer. NADP(+) serves as cofactor.

It carries out the reaction ADP-D-glycero-beta-D-manno-heptose = ADP-L-glycero-beta-D-manno-heptose. It functions in the pathway nucleotide-sugar biosynthesis; ADP-L-glycero-beta-D-manno-heptose biosynthesis; ADP-L-glycero-beta-D-manno-heptose from D-glycero-beta-D-manno-heptose 7-phosphate: step 4/4. Catalyzes the interconversion between ADP-D-glycero-beta-D-manno-heptose and ADP-L-glycero-beta-D-manno-heptose via an epimerization at carbon 6 of the heptose. This Erwinia tasmaniensis (strain DSM 17950 / CFBP 7177 / CIP 109463 / NCPPB 4357 / Et1/99) protein is ADP-L-glycero-D-manno-heptose-6-epimerase.